The following is a 247-amino-acid chain: Flavin-dependent thymidylate synthase (247 aa).

The ThyX domain maps to 1–237 (MRVRLLEATE…PHTFEYYDAE (237 aa)). DUMP contacts are provided by residues 85–88 (QLTR), 98–100 (SMR), and Arg-176. 88 to 90 (RHR) provides a ligand contact to FAD. A ThyX motif motif is present at residues 88–98 (RHRHASFDVQS). FAD-binding positions include 192–194 (NPR) and His-198. Arg-203 contacts dUMP. Arg-203 acts as the Involved in ionization of N3 of dUMP, leading to its activation in catalysis.

Belongs to the thymidylate synthase ThyX family. Homotetramer. FAD serves as cofactor.

It catalyses the reaction dUMP + (6R)-5,10-methylene-5,6,7,8-tetrahydrofolate + NADPH + H(+) = dTMP + (6S)-5,6,7,8-tetrahydrofolate + NADP(+). The protein operates within pyrimidine metabolism; dTTP biosynthesis. Catalyzes the reductive methylation of 2'-deoxyuridine-5'-monophosphate (dUMP) to 2'-deoxythymidine-5'-monophosphate (dTMP) while utilizing 5,10-methylenetetrahydrofolate (mTHF) as the methyl donor, and NADPH and FADH(2) as the reductant. The sequence is that of Flavin-dependent thymidylate synthase from Halobacterium salinarum (strain ATCC 700922 / JCM 11081 / NRC-1) (Halobacterium halobium).